A 362-amino-acid chain; its full sequence is Probable endopolygalacturonase B (362 aa).

The N-terminal stretch at 1–20 is a signal peptide; the sequence is MHFLQNAVVAATMGAALAAA. The propeptide occupies 21–25; sequence APLEK. A disulfide bond links C28 and C43. PbH1 repeat units lie at residues 155-184, 185-206, 207-227, 236-257, 265-287, and 299-344; these read ADHL…DIGQ, STYI…AINS, GEHI…SIGS, VNDV…RIKT, VENV…VVEQ, and TNGV…DVTG. Catalysis depends on D199, which acts as the Proton donor. The cysteines at positions 201 and 217 are disulfide-linked. H221 is a catalytic residue. C327 and C332 are oxidised to a cystine. N-linked (GlcNAc...) asparagine glycosylation occurs at N334. An intrachain disulfide couples C351 to C360.

It belongs to the glycosyl hydrolase 28 family.

It is found in the secreted. It carries out the reaction (1,4-alpha-D-galacturonosyl)n+m + H2O = (1,4-alpha-D-galacturonosyl)n + (1,4-alpha-D-galacturonosyl)m.. Its function is as follows. Involved in maceration and soft-rotting of plant tissue. Hydrolyzes the 1,4-alpha glycosidic bonds of de-esterified pectate in the smooth region of the plant cell wall. The sequence is that of Probable endopolygalacturonase B (pgaB) from Aspergillus niger (strain ATCC MYA-4892 / CBS 513.88 / FGSC A1513).